A 504-amino-acid chain; its full sequence is Sodium-coupled neutral amino acid symporter 2 (504 aa).

Residues 1 to 23 (MKKTEMGRFNISPDEDSSSYSSN) are disordered. Residues 1–76 (MKKTEMGRFN…HPGTTSFGMS (76 aa)) are Cytoplasmic-facing. Positions 1-96 (MKKTEMGRFN…SGILGLSYAM (96 aa)) are regulates protein turnover upon amino acid deprivation. A phosphoserine mark is found at Ser12, Ser21, Ser22, and Ser55. Residues 77–96 (VFNLSNAIVGSGILGLSYAM) traverse the membrane as a helical segment. Asn82 contributes to the Na(+) binding site. The Extracellular segment spans residues 97–102 (ANTGIA). Residues 103 to 123 (LFIILLTFVSIFSLYSVHLLL) traverse the membrane as a helical segment. Residues 124–158 (KTANEGGSLLYEQLGHKAYGLAGKLAASGSITMQN) are Cytoplasmic-facing. Residues 159–177 (IGAMSSYLFIVKYELPLVI) traverse the membrane as a helical segment. Residues 178-188 (KALMNIEDTNG) are Extracellular-facing. A helical membrane pass occupies residues 189–209 (LWYLNGDYLVLLVSLVLILPL). Residues 210–217 (SLLRNLGY) are Cytoplasmic-facing. The chain crosses the membrane as a helical span at residues 218–238 (LGYTSGLSLLCMIFFLIVVIC). The Extracellular portion of the chain corresponds to 239–289 (KKFQIPCPVEAALVANETVNGTFTQAALALAFNSTADDACRPRYFIFNSQT). Cysteines 245 and 278 form a disulfide. 2 N-linked (GlcNAc...) asparagine glycosylation sites follow: Asn254 and Asn258. A helical membrane pass occupies residues 290–310 (VYAVPILTFSFVCHPAVLPIY). The Cytoplasmic segment spans residues 311–326 (EELKSRSRRRMMNVSK). The chain crosses the membrane as a helical span at residues 327-347 (ISFFAMFLMYLLAALFGYLTF). The Extracellular segment spans residues 348-368 (YGHVESELLHTYSEIVGTDIL). The chain crosses the membrane as a helical span at residues 369–389 (LLVVRLAVLVAVTLTVPVVIF). Thr383 contributes to the Na(+) binding site. Residues 390–410 (PIRSSVTHLLCPTKEFSWLRH) lie on the Cytoplasmic side of the membrane. Residues 411-431 (SIITVTILSFTNLLVIFVPTI) form a helical membrane-spanning segment. At 432 to 433 (RD) the chain is on the extracellular side. The helical transmembrane segment at 434 to 454 (IFGFIGASAAAMLIFILPSAF) threads the bilayer. Residues 455–469 (YIKLVKKEPMRSVQK) lie on the Cytoplasmic side of the membrane. The chain crosses the membrane as a helical span at residues 470-492 (IGALCFLLSGIVVMIGSMGLIVL). Residues 493 to 504 (DWVHDASAAGGH) are Extracellular-facing.

Belongs to the amino acid/polyamine transporter 2 family. In terms of processing, polyubiquitination by NEDD4L regulates the degradation and the activity of SLC38A2. Expressed in cerebral and cerebellar astrocytes and neurons.

It localises to the cell membrane. The catalysed reaction is L-alanine(in) + Na(+)(in) = L-alanine(out) + Na(+)(out). The enzyme catalyses glycine(in) + Na(+)(in) = glycine(out) + Na(+)(out). It carries out the reaction L-serine(in) + Na(+)(in) = L-serine(out) + Na(+)(out). It catalyses the reaction L-proline(in) + Na(+)(in) = L-proline(out) + Na(+)(out). The catalysed reaction is L-methionine(in) + Na(+)(in) = L-methionine(out) + Na(+)(out). The enzyme catalyses L-histidine(in) + Na(+)(in) = L-histidine(out) + Na(+)(out). It carries out the reaction L-asparagine(in) + Na(+)(in) = L-asparagine(out) + Na(+)(out). It catalyses the reaction L-glutamine(in) + Na(+)(in) = L-glutamine(out) + Na(+)(out). The catalysed reaction is L-threonine(in) + Na(+)(in) = L-threonine(out) + Na(+)(out). The enzyme catalyses L-leucine(in) + Na(+)(in) = L-leucine(out) + Na(+)(out). It carries out the reaction L-phenylalanine(in) + Na(+)(in) = L-phenylalanine(out) + Na(+)(out). Inhibited by N-methyl-D-glucamine. Inhibited by choline. Allosteric regulation of sodium ions binding by pH. Its function is as follows. Symporter that cotransports neutral amino acids and sodium ions from the extracellular to the intracellular side of the cell membrane. The transport is pH-sensitive, Li(+)-intolerant, electrogenic, driven by the Na(+) electrochemical gradient and cotransports of neutral amino acids and sodium ions with a stoichiometry of 1:1. May function in the transport of amino acids at the blood-brain barrier. May function in the transport of amino acids in the supply of maternal nutrients to the fetus through the placenta. Maintains a key metabolic glutamine/glutamate balance underpinning retrograde signaling by dendritic release of the neurotransmitter glutamate. Transports L-proline in differentiating osteoblasts for the efficient synthesis of proline-enriched proteins and provides proline essential for osteoblast differentiation and bone formation during bone development. The polypeptide is Sodium-coupled neutral amino acid symporter 2 (Mus musculus (Mouse)).